The primary structure comprises 603 residues: Elongation factor 4 (603 aa).

One can recognise a tr-type G domain in the interval 7–189 (VRIRNFCIIA…AVVERIPPPP (183 aa)). Residues 19–24 (DHGKST) and 136–139 (NKID) contribute to the GTP site.

It belongs to the TRAFAC class translation factor GTPase superfamily. Classic translation factor GTPase family. LepA subfamily.

It localises to the cell inner membrane. It catalyses the reaction GTP + H2O = GDP + phosphate + H(+). In terms of biological role, required for accurate and efficient protein synthesis under certain stress conditions. May act as a fidelity factor of the translation reaction, by catalyzing a one-codon backward translocation of tRNAs on improperly translocated ribosomes. Back-translocation proceeds from a post-translocation (POST) complex to a pre-translocation (PRE) complex, thus giving elongation factor G a second chance to translocate the tRNAs correctly. Binds to ribosomes in a GTP-dependent manner. The polypeptide is Elongation factor 4 (Nostoc punctiforme (strain ATCC 29133 / PCC 73102)).